A 346-amino-acid chain; its full sequence is MTIAVAMSGGTDSLFALVLLKEQGQQVCGLHARFIPPTGHDPVPDIRAMCDRLGVDLHVVDLTEAFEEHVVRPFMEDYMVGRTPNPCARCNATMKFGLLADAAAHVGAVHLATGHYARLLRHPRWGTVLQRGVDPAKDQSYFLSLVPHARLEKAVFPLGNWRKEAVRGELARRSIVPPLPSESQEICFVPDDDYRAFLKDRRVRLPGPGPIVTTRGRKIGSHAGLWQYTEGQRKGLGIAWHEPLYVVGKDMENNMLLVGGREALASPGCVAEEVNLLVPYEDWPAEVAVRIRYRQQPLSARVTLRDGRLYARFREPQPPAARGQVLAVYDMEHHVLGGGVILGPLP.

6-13 (AMSGGTDS) serves as a coordination point for ATP. The Nucleophile role is filled by C90. C90 and C187 are joined by a disulfide. G114 is an ATP binding site. An interaction with tRNA region spans residues 137-139 (KDQ). Catalysis depends on C187, which acts as the Cysteine persulfide intermediate. Residues 292-293 (RY) form an interaction with tRNA region.

It belongs to the MnmA/TRMU family.

Its subcellular location is the cytoplasm. It catalyses the reaction S-sulfanyl-L-cysteinyl-[protein] + uridine(34) in tRNA + AH2 + ATP = 2-thiouridine(34) in tRNA + L-cysteinyl-[protein] + A + AMP + diphosphate + H(+). Functionally, catalyzes the 2-thiolation of uridine at the wobble position (U34) of tRNA, leading to the formation of s(2)U34. The protein is tRNA-specific 2-thiouridylase MnmA of Nitratidesulfovibrio vulgaris (strain ATCC 29579 / DSM 644 / CCUG 34227 / NCIMB 8303 / VKM B-1760 / Hildenborough) (Desulfovibrio vulgaris).